Here is an 878-residue protein sequence, read N- to C-terminus: Leucine--tRNA ligase (878 aa).

The 'HIGH' region signature appears at 56–66; the sequence is PYPSGKLHMGH. Residues 630–634 carry the 'KMSKS' region motif; that stretch reads KMSKS. Residue lysine 633 participates in ATP binding.

Belongs to the class-I aminoacyl-tRNA synthetase family.

The protein localises to the cytoplasm. The enzyme catalyses tRNA(Leu) + L-leucine + ATP = L-leucyl-tRNA(Leu) + AMP + diphosphate. This is Leucine--tRNA ligase from Prochlorococcus marinus (strain MIT 9303).